Consider the following 502-residue polypeptide: uncharacterized protein (502 aa).

3 stretches are compositionally biased toward low complexity: residues 1–10 (MQSTTNNNTN), 28–47 (SNRSAYRSASKSASRSNNLS), and 155–171 (NTEDTNDDNSNSQSVNS). Disordered regions lie at residues 1–57 (MQST…VISY), 155–181 (NTEDTNDDNSNSQSVNSRTDSDNLSAR), 212–362 (SLGN…TDKF), and 438–487 (TIDQ…TSNL). Residues 212-230 (SLGNSERNSPDRPSTQGDS) show a composition bias toward polar residues. 2 stretches are compositionally biased toward low complexity: residues 242 to 290 (RNAS…SSRN) and 309 to 327 (SNKNSASRNSASRNSTSIK). Residues 339–348 (QTNKSKNQRG) are compositionally biased toward polar residues. Positions 446–460 (TSDKNNSTKSNTKYN) are enriched in low complexity. Positions 470–487 (SYGTSKRSHNRSSNTSNL) are enriched in polar residues.

Its subcellular location is the virion. This is an uncharacterized protein from Acanthamoeba polyphaga (Amoeba).